We begin with the raw amino-acid sequence, 495 residues long: ATP-NADH kinase YEF1 (495 aa).

The tract at residues 442-480 is disordered; that stretch reads KYRLDSSKNGNDTISNPLESSCISSDAQDEERKSVTETE. The segment covering 448-467 has biased composition (polar residues); that stretch reads SKNGNDTISNPLESSCISSD.

This sequence belongs to the NAD kinase family. As to quaternary structure, homooctamer. Requires Mg(2+) as cofactor. It depends on Mn(2+) as a cofactor. The cofactor is Co(2+). Ca(2+) is required as a cofactor.

The enzyme catalyses NADH + ATP = ADP + NADPH + H(+). Functionally, ATP-NADH kinase with a low phosphorylation activity of both NADH and NAD(+) to produce NADP and NADPH by using ATP. UTR1 is responsible for essentially all of the NAD/NADH kinase activity resident in the cytoplasm, whereas POS5 is responsible for all mitochondrial NAD/NADH kinase activity and consequent mitochondrial genome maintenance. YEF1 can substitute for UTR1 when overexpressed. The protein is ATP-NADH kinase YEF1 (YEF1) of Saccharomyces cerevisiae (strain ATCC 204508 / S288c) (Baker's yeast).